Consider the following 202-residue polypeptide: Holliday junction branch migration complex subunit RuvA (202 aa).

The domain I stretch occupies residues 1–64 (MIGRLRGSLA…EDAHLLYGFY (64 aa)). The domain II stretch occupies residues 65–143 (EKRERELFRE…AWEALPGTFT (79 aa)). Residues 144-153 (LVSNGPNQAE) are flexible linker. The segment at 154–202 (PVASAESDAVSALISLGYKPQEASKAVSAIKEKDLSSADLIRRALKGMG) is domain III.

It belongs to the RuvA family. In terms of assembly, homotetramer. Forms an RuvA(8)-RuvB(12)-Holliday junction (HJ) complex. HJ DNA is sandwiched between 2 RuvA tetramers; dsDNA enters through RuvA and exits via RuvB. An RuvB hexamer assembles on each DNA strand where it exits the tetramer. Each RuvB hexamer is contacted by two RuvA subunits (via domain III) on 2 adjacent RuvB subunits; this complex drives branch migration. In the full resolvosome a probable DNA-RuvA(4)-RuvB(12)-RuvC(2) complex forms which resolves the HJ.

The protein localises to the cytoplasm. Functionally, the RuvA-RuvB-RuvC complex processes Holliday junction (HJ) DNA during genetic recombination and DNA repair, while the RuvA-RuvB complex plays an important role in the rescue of blocked DNA replication forks via replication fork reversal (RFR). RuvA specifically binds to HJ cruciform DNA, conferring on it an open structure. The RuvB hexamer acts as an ATP-dependent pump, pulling dsDNA into and through the RuvAB complex. HJ branch migration allows RuvC to scan DNA until it finds its consensus sequence, where it cleaves and resolves the cruciform DNA. The sequence is that of Holliday junction branch migration complex subunit RuvA from Pseudomonas syringae pv. syringae (strain B728a).